The following is a 493-amino-acid chain: Amino acid permease 2 (493 aa).

Topologically, residues 1–49 (MGETAAANNHRHHHHHGHQVFDVASHDFVPPQPAFKCFDDDGRLKRTGT) are cytoplasmic. Helical transmembrane passes span 50-70 (VWTA…LSLA) and 71-91 (WAIA…FSLV). Over 92 to 138 (TLYSSTLLSDCYRTGDAVSGKRNYTYMDAVRSILGGFKFKICGLIQY) the chain is Cytoplasmic. A helical transmembrane segment spans residues 139–159 (LNLFGIAIGYTIAASISMMAI). Residues 160-175 (KRSNCFHKSGGKDPCH) are Extracellular-facing. Residues 176-196 (MSSNPYMIVFGVAEILLSQVP) traverse the membrane as a helical segment. Topologically, residues 197–200 (DFDQ) are cytoplasmic. A helical transmembrane segment spans residues 201 to 221 (IWWISIVAAVMSFTYSAIGLA). Topologically, residues 222–253 (LGIVQVAANGVFKGSLTGISIGTVTQTQKIWR) are extracellular. The chain crosses the membrane as a helical span at residues 254-274 (TFQALGDIAFAYSYSVVLIEI). The Cytoplasmic segment spans residues 275–293 (QDTVRSPPAESKTMKKATK). Residues 294–314 (ISIAVTTIFYMLCGSMGYAAF) traverse the membrane as a helical segment. The Extracellular segment spans residues 315-340 (GDAAPGNLLTGFGFYNPFWLLDIANA). Residues 341–361 (AIVVHLVGAYQVFAQPIFAFI) form a helical membrane-spanning segment. The Cytoplasmic portion of the chain corresponds to 362–396 (EKSVAERYPDNDFLSKEFEIRIPGFKSPYKVNVFR). A helical membrane pass occupies residues 397–417 (MVYRSGFVVTTTVISMLMPFF). Topologically, residues 418-419 (ND) are extracellular. A helical membrane pass occupies residues 420–440 (VVGILGALGFWPLTVYFPVEM). At 441 to 458 (YIKQRKVEKWSTRWVCLQ) the chain is on the cytoplasmic side. The helical transmembrane segment at 459–479 (MLSVACLVISVVAGVGSIAGV) threads the bilayer. Residues 480–493 (MLDLKVYKPFKSTY) are Extracellular-facing.

Belongs to the amino acid/polyamine transporter 2 family. Amino acid/auxin permease (AAAP) (TC 2.A.18.2) subfamily. As to expression, highly expressed in developing pods. Found in the vascular strands of siliques, cotyledons, leaves and roots, in the inner phloem of stems, and in the funiculi. Lower levels of expression in flowers. Not expressed in seeds.

The protein localises to the cell membrane. Its activity is regulated as follows. Inhibited by diethylpyrocarbonate (DEPC). Functionally, amino acid-proton symporter. Stereospecific transporter with a broad specificity for histidine, arginine, glutamate and neutral amino acids, favoring small amino acids such as alanine, asparagine and glutamine. Also accepts large aromatic residues such as phenlalanine or tyrosine. Has a much higher affinity for basic amino acids as compared with AAP1. May function in xylem-to-phloem transfer and in uptake of amino acids assimilated in the green silique tissue. This Arabidopsis thaliana (Mouse-ear cress) protein is Amino acid permease 2 (AAP2).